The following is a 239-amino-acid chain: Cyclo(L-leucyl-L-phenylalanyl) synthase (239 aa).

The Nucleophile role is filled by S37. Substrate is bound by residues N40, 178–182, and Y202; that span reads YVLAE.

Belongs to the CDPS family. In terms of assembly, monomer.

The catalysed reaction is L-phenylalanyl-tRNA(Phe) + L-leucyl-tRNA(Leu) = cyclo(L-phenylalanyl-L-leucyl) + tRNA(Phe) + tRNA(Leu) + H(+). Functionally, involved in the biosynthesis of albonoursin (cyclo[(alpha,beta-dehydro-Phe)-(alpha,beta-dehydro-Leu)]), an antibacterial peptide. It uses activated amino acids in the form of aminoacyl-tRNAs (aa-tRNAs) as substrates to catalyze the ATP-independent formation of cyclodipeptides which are intermediates in diketopiperazine (DKP) biosynthetic pathways. Catalyzes the formation of cyclo(L-Phe-L-Leu) (cFL) as major products from L-L-phenylalanyl-tRNA(Phe) and L-leucyl-tRNA(Leu). AlbC can also incorporate various nonpolar residues, such as L-phenylalanine, L-leucine, L-tyrosine and L-methionine, and to a much lesser extent L-alanine and L-valine, into cyclodipeptides. Indeed, ten possible cyclodipeptides composed of L-phenylalanine, L-leucine, L-tyrosine and L-methionine are all synthesized to detectable amounts by AlbC. The polypeptide is Cyclo(L-leucyl-L-phenylalanyl) synthase (albC) (Streptomyces noursei (Streptomyces albulus)).